The sequence spans 1478 residues: DNA-directed RNA polymerase subunit beta' (1478 aa).

Mg(2+) contacts are provided by Asp-535, Asp-537, and Asp-539. 4 residues coordinate Zn(2+): Cys-1034, Cys-1109, Cys-1116, and Cys-1119.

Belongs to the RNA polymerase beta' chain family. The RNAP catalytic core consists of 2 alpha, 1 beta, 1 beta' and 1 omega subunit. When a sigma factor is associated with the core the holoenzyme is formed, which can initiate transcription. Mg(2+) is required as a cofactor. Requires Zn(2+) as cofactor.

It carries out the reaction RNA(n) + a ribonucleoside 5'-triphosphate = RNA(n+1) + diphosphate. In terms of biological role, DNA-dependent RNA polymerase catalyzes the transcription of DNA into RNA using the four ribonucleoside triphosphates as substrates. This chain is DNA-directed RNA polymerase subunit beta', found in Mycoplasmopsis agalactiae (strain NCTC 10123 / CIP 59.7 / PG2) (Mycoplasma agalactiae).